Reading from the N-terminus, the 550-residue chain is Arginine--tRNA ligase (550 aa).

The short motif at 130 to 140 (ANPTGPIHLGG) is the 'HIGH' region element.

This sequence belongs to the class-I aminoacyl-tRNA synthetase family. Monomer.

It is found in the cytoplasm. It catalyses the reaction tRNA(Arg) + L-arginine + ATP = L-arginyl-tRNA(Arg) + AMP + diphosphate. The polypeptide is Arginine--tRNA ligase (Corynebacterium efficiens (strain DSM 44549 / YS-314 / AJ 12310 / JCM 11189 / NBRC 100395)).